We begin with the raw amino-acid sequence, 1564 residues long: MLQAPSSSNSGLNQGNAAPDGPPNETQPYEGLDAAAQEEIKELARTLTSQSSLLSQEKRITGTGDPNTLTAASSSSLSRSIFASDIKGVNPILLDVNDPDYDETLDPRSENFSSVRWVRNMAQICENDSDFYKPFSLGCAWKDLSASGDSADITYQGTFGNMPIKYLKMSWRCISRRLFHRTHGKSEDNDSGFQILKPMDGCINPGELLVVLGRPGAGCTTLLKSISVNTHGFKISPDTIITYNGFSNKEIKNHYRGEVVYNAESDIHIPHLTVFQTLYTVARLKTPRNRIKGVDRDTFAKHMTEVAMATYGLSHTADTKVGNDFVRGVSGGERKRVSIAEVSICGSKFQCWDNATRGLDSATALEFIKALKTQATITKSAATVAIYQCSKDAYDLFDKVCVLYDGYQIFFGPSKQAKKYFQRMGYVCPERQTTADYLTSITSPSERIKDKDMVKHGIMIPQTAYEMNQYWIQSEEYKQLQVQVNKHLDTDSSQQREQIKNAHIAKQSKRARPSSPYTVSFFLQVKYILIRDIWRIKNDPSIQLFTVLSHAAMALILGSMFYEVMLSTTTTTFYYRGAAIFFAILFNAFSSLLEIFSLYETRPITEKHKTYSLYRPSADAFASTFSDVPTKLATAVTFNIPYYFLINLKRDAGAFFFYFLINIITVFAMSHLFRCIGSVSKTLPQAMVPASVLLLAFAMYTGFAIPRVQMLGWSKWISYINPLSYLFESLMINEFHGRNFPCAQYIPSGPNYVNATGDEVTCSALGSIPGNNYVSGDDFIQTNYGYRHKNKWRSVGIGLAYIIFFLFLYLFFCEYNEGAKQNGEMLVFPHSVVKKMKKKGIVSEKKKKNQPTLSTSDAEKDVEMNNNSSATDSRFLRDSDAAIMGNDKTVAKEHYSSPSSSASQSNSFSKSDDIELSKSQAIFHWKNLCYDIPIKNGKRRILDNVDGWVKPGTLTALIGASGAGKTTLLDCLAERTTMGLITGDVFVDGRPRDQSFPRSIGYCQQQDLHLKTATVRESLRFSAYLRQADDVSIEEKDKYVEEVIEVLEMKLYADAIVGVPGEGLNVEQRKRLTIGVELAAKPKLLVFLDEPTSGLDSQTAWSTCQLMKKLASRGQAILCTIHQPSALLMQEFDRLLFLQEGGQTVYFGELGKGCKTMINYFEAHGAHKCPPDANPAEWMLEIVGAAPGTHASQDYFAIWRDSEEYREMQKELDWMERELPKRTEGSSNEEQKEFATSTLYQIKLVSYRLFHQYWRTPFYLWSKFFSTIVSELFIGFTFFKANTSLQGLQNQMLAIFMFTVVFNPILQQYLPLFVQQRELYEARERPSRTFSWKAFIVSQILVEIPWNLLAGTIAFFVYYYPVGFYRNASYANQLHERGALFWLFACAFYVYISSMGVLVISCIEIAENAANLASLFFIMSLSFCGVLATPNILPRFWIFMYRVSPLTYLIDALLSVGLANASVVCSSNELLKIVPPSGMTCSEYMEPYMQSTGTGYLLDGSSETECHFCQFSSTNDYLATVSSSYSRRWMNYGIFSAYIVFDYCAAIFLYWLVRVPKKSKKLKK.

A compositionally biased stretch (polar residues) spans 1–16 (MLQAPSSSNSGLNQGN). The tract at residues 1–37 (MLQAPSSSNSGLNQGNAAPDGPPNETQPYEGLDAAAQ) is disordered. Over 1–587 (MLQAPSSSNS…AAIFFAILFN (587 aa)) the chain is Cytoplasmic. The ABC transporter 1 domain maps to 174–430 (ISRRLFHRTH…FQRMGYVCPE (257 aa)). The next 5 membrane-spanning stretches (helical) occupy residues 588-608 (AFSS…TEKH), 624-644 (TFSD…PYYF), 674-694 (RCIG…SVLL), 699-719 (MYTG…WISY), and 732-752 (INEF…GPNY). An N-linked (GlcNAc...) asparagine glycan is attached at N754. Positions 839–849 (KGIVSEKKKKN) are enriched in basic residues. The interval 839–872 (KGIVSEKKKKNQPTLSTSDAEKDVEMNNNSSATD) is disordered. A helical membrane pass occupies residues 841-861 (IVSEKKKKNQPTLSTSDAEKD). Residues 862–1304 (VEMNNNSSAT…IFMFTVVFNP (443 aa)) are Cytoplasmic-facing. The ABC transporter 2 domain maps to 923–1166 (FHWKNLCYDI…MINYFEAHGA (244 aa)). 959–966 (GASGAGKT) contributes to the ATP binding site. Transmembrane regions (helical) follow at residues 1305–1325 (ILQQ…ARER), 1340–1360 (ILVE…VYYY), 1390–1410 (VYIS…ENAA), 1426–1446 (VLAT…VSPL), 1459–1479 (ANAS…PSGM), and 1491–1511 (STGT…FCQF). At 1512–1564 (SSTNDYLATVSSSYSRRWMNYGIFSAYIVFDYCAAIFLYWLVRVPKKSKKLKK) the chain is on the cytoplasmic side.

The protein belongs to the ABC transporter superfamily. ABCG family. PDR (TC 3.A.1.205) subfamily.

It is found in the membrane. The polypeptide is ATP-dependent permease PDR10 (PDR10) (Saccharomyces cerevisiae (strain ATCC 204508 / S288c) (Baker's yeast)).